The primary structure comprises 120 residues: Chaperonin GroEL (120 aa).

D23–T27 contacts ATP.

It belongs to the chaperonin (HSP60) family. Forms a cylinder of 14 subunits composed of two heptameric rings stacked back-to-back. Interacts with the co-chaperonin GroES.

The protein resides in the cytoplasm. It carries out the reaction ATP + H2O + a folded polypeptide = ADP + phosphate + an unfolded polypeptide.. Functionally, together with its co-chaperonin GroES, plays an essential role in assisting protein folding. The GroEL-GroES system forms a nano-cage that allows encapsulation of the non-native substrate proteins and provides a physical environment optimized to promote and accelerate protein folding. In Mycobacterium intracellulare, this protein is Chaperonin GroEL.